The primary structure comprises 338 residues: RNA 3'-terminal phosphate cyclase (338 aa).

Residues Q103 and 283 to 287 (YLADQ) each bind ATP. H308 serves as the catalytic Tele-AMP-histidine intermediate.

Belongs to the RNA 3'-terminal cyclase family. Type 1 subfamily.

Its subcellular location is the cytoplasm. The enzyme catalyses a 3'-end 3'-phospho-ribonucleotide-RNA + ATP = a 3'-end 2',3'-cyclophospho-ribonucleotide-RNA + AMP + diphosphate. In terms of biological role, catalyzes the conversion of 3'-phosphate to a 2',3'-cyclic phosphodiester at the end of RNA. The mechanism of action of the enzyme occurs in 3 steps: (A) adenylation of the enzyme by ATP; (B) transfer of adenylate to an RNA-N3'P to produce RNA-N3'PP5'A; (C) and attack of the adjacent 2'-hydroxyl on the 3'-phosphorus in the diester linkage to produce the cyclic end product. The biological role of this enzyme is unknown but it is likely to function in some aspects of cellular RNA processing. The chain is RNA 3'-terminal phosphate cyclase from Escherichia coli O6:H1 (strain CFT073 / ATCC 700928 / UPEC).